The chain runs to 383 residues: Arginine biosynthesis bifunctional protein ArgJ 1 (383 aa).

Residues 1-25 (MTVTAPKGSTGGGCRRGSKESGQPD) are disordered. Substrate contacts are provided by threonine 146, lysine 168, threonine 179, glutamate 259, asparagine 378, and serine 383. Residue threonine 179 is the Nucleophile of the active site.

This sequence belongs to the ArgJ family. In terms of assembly, heterotetramer of two alpha and two beta chains.

The protein localises to the cytoplasm. The catalysed reaction is N(2)-acetyl-L-ornithine + L-glutamate = N-acetyl-L-glutamate + L-ornithine. The enzyme catalyses L-glutamate + acetyl-CoA = N-acetyl-L-glutamate + CoA + H(+). The protein operates within amino-acid biosynthesis; L-arginine biosynthesis; L-ornithine and N-acetyl-L-glutamate from L-glutamate and N(2)-acetyl-L-ornithine (cyclic): step 1/1. It participates in amino-acid biosynthesis; L-arginine biosynthesis; N(2)-acetyl-L-ornithine from L-glutamate: step 1/4. In terms of biological role, catalyzes two activities which are involved in the cyclic version of arginine biosynthesis: the synthesis of N-acetylglutamate from glutamate and acetyl-CoA as the acetyl donor, and of ornithine by transacetylation between N(2)-acetylornithine and glutamate. The protein is Arginine biosynthesis bifunctional protein ArgJ 1 of Streptomyces clavuligerus.